Reading from the N-terminus, the 430-residue chain is mRNA cap guanine-N(7) methyltransferase (430 aa).

The disordered stretch occupies residues 1-88 (MALRPEKPVW…YDLEERKKKQ (88 aa)). Over residues 15 to 37 (QYDRQYGKLEEPKPPREESKPGD) the composition is skewed to basic and acidic residues. The mRNA cap 0 methyltransferase domain maps to 136 to 419 (SPIIKLRNFN…FYTVFAFRKV (284 aa)). An mRNA-binding site is contributed by 145-146 (NN). The S-adenosyl-L-methionine site is built by Lys149, Gly167, Asp189, Asp218, Gln244, and Tyr249.

Belongs to the class I-like SAM-binding methyltransferase superfamily. mRNA cap 0 methyltransferase family.

The protein resides in the nucleus. The catalysed reaction is a 5'-end (5'-triphosphoguanosine)-ribonucleoside in mRNA + S-adenosyl-L-methionine = a 5'-end (N(7)-methyl 5'-triphosphoguanosine)-ribonucleoside in mRNA + S-adenosyl-L-homocysteine. In terms of biological role, responsible for methylating the 5'-cap structure of mRNAs. This is mRNA cap guanine-N(7) methyltransferase (ABD1) from Eremothecium gossypii (strain ATCC 10895 / CBS 109.51 / FGSC 9923 / NRRL Y-1056) (Yeast).